The sequence spans 611 residues: Putative pentatricopeptide repeat-containing protein At1g56570 (611 aa).

13 PPR repeats span residues 44–74 (HHILATNLIVSYFEKGLVEEARSLFDEMPDR), 75–109 (DVVAWTAMITGYASSNYNARAWECFHEMVKQGTSP), 110–144 (NEFTLSSVLKSCRNMKVLAYGALVHGVVVKLGMEG), 145–176 (SLYVDNAMMNMYATCSVTMEAACLIFRDIKVK), 177–211 (NDVTWTTLITGFTHLGDGIGGLKMYKQMLLENAEV), 212–246 (TPYCITIAVRASASIDSVTTGKQIHASVIKRGFQS), 247–281 (NLPVMNSILDLYCRCGYLSEAKHYFHEMEDKDLIT), 282–311 (WNTLISELERSDSSEALLMFQRFESQGFVP), 312–346 (NCYTFTSLVAACANIAALNCGQQLHGRIFRRGFNK), 347–377 (NVELANALIDMYAKCGNIPDSQRVFGEIVDR), 379–413 (NLVSWTSMMIGYGSHGYGAEAVELFDKMVSSGIRP), 414–444 (DRIVFMAVLSACRHAGLVEKGLKYFNVMESE), and 450–480 (DRDIYNCVVDLLGRAGKIGEAYELVERMPFK). The interval 485-561 (TWGAILGACK…EAGMSWILVE (77 aa)) is type E motif. Residues 562-592 (NQVFSFAVSDKMCPNASSVYSVLGLLIEETR) are type E(+) motif.

It belongs to the PPR family. PCMP-E subfamily.

The protein is Putative pentatricopeptide repeat-containing protein At1g56570 (PCMP-E64) of Arabidopsis thaliana (Mouse-ear cress).